A 468-amino-acid polypeptide reads, in one-letter code: 23S rRNA (uracil(1939)-C(5))-methyltransferase RlmD (468 aa).

The TRAM domain occupies 12–70; the sequence is SKQLSPKLSLNVTQLDHLGAGMAQHQGKVVFIPQALPGERVSVQLTDQKKSFAKAKLIK. [4Fe-4S] cluster-binding residues include Cys83, Cys89, Cys92, and Cys174. S-adenosyl-L-methionine-binding residues include Gln296, Phe325, Asn330, Glu351, Asp378, and Asp398. Cys424 (nucleophile) is an active-site residue.

Belongs to the class I-like SAM-binding methyltransferase superfamily. RNA M5U methyltransferase family. RlmD subfamily.

It carries out the reaction uridine(1939) in 23S rRNA + S-adenosyl-L-methionine = 5-methyluridine(1939) in 23S rRNA + S-adenosyl-L-homocysteine + H(+). Catalyzes the formation of 5-methyl-uridine at position 1939 (m5U1939) in 23S rRNA. In Shewanella denitrificans (strain OS217 / ATCC BAA-1090 / DSM 15013), this protein is 23S rRNA (uracil(1939)-C(5))-methyltransferase RlmD.